A 544-amino-acid chain; its full sequence is uncharacterized protein (544 aa).

A signal peptide spans methionine 1 to tyrosine 22.

This is an uncharacterized protein from Methanocaldococcus jannaschii (strain ATCC 43067 / DSM 2661 / JAL-1 / JCM 10045 / NBRC 100440) (Methanococcus jannaschii).